Reading from the N-terminus, the 373-residue chain is Transcription factor bHLH87 (373 aa).

The segment at 127-227 is disordered; the sequence is SAESENREIT…GGSSNISFQH (101 aa). Over residues 188–218 the composition is skewed to basic and acidic residues; the sequence is PQDDSEKGGFKLIYDENQSKSKKPRTEKERG. Positions 275–324 constitute a bHLH domain; it reads ISTDPQTVAARQRRERISEKIRVLQTLVPGGTKMDTASMLDEAANYLKFL.

As to quaternary structure, homodimer. Flowers.

Its subcellular location is the nucleus. The polypeptide is Transcription factor bHLH87 (BHLH87) (Arabidopsis thaliana (Mouse-ear cress)).